A 61-amino-acid polypeptide reads, in one-letter code: Small ribosomal subunit protein uS14 (61 aa).

Cysteine 24, cysteine 27, cysteine 40, and cysteine 43 together coordinate Zn(2+).

It belongs to the universal ribosomal protein uS14 family. Zinc-binding uS14 subfamily. In terms of assembly, part of the 30S ribosomal subunit. Contacts proteins S3 and S10. Zn(2+) serves as cofactor.

Functionally, binds 16S rRNA, required for the assembly of 30S particles and may also be responsible for determining the conformation of the 16S rRNA at the A site. The sequence is that of Small ribosomal subunit protein uS14 from Helicobacter pylori (strain J99 / ATCC 700824) (Campylobacter pylori J99).